The following is a 631-amino-acid chain: Glutamyl-tRNA(Gln) amidotransferase subunit E (631 aa).

It belongs to the GatB/GatE family. GatE subfamily. In terms of assembly, heterodimer of GatD and GatE.

The catalysed reaction is L-glutamyl-tRNA(Gln) + L-glutamine + ATP + H2O = L-glutaminyl-tRNA(Gln) + L-glutamate + ADP + phosphate + H(+). In terms of biological role, allows the formation of correctly charged Gln-tRNA(Gln) through the transamidation of misacylated Glu-tRNA(Gln) in organisms which lack glutaminyl-tRNA synthetase. The reaction takes place in the presence of glutamine and ATP through an activated gamma-phospho-Glu-tRNA(Gln). The GatDE system is specific for glutamate and does not act on aspartate. The chain is Glutamyl-tRNA(Gln) amidotransferase subunit E from Methanococcus maripaludis (strain C6 / ATCC BAA-1332).